We begin with the raw amino-acid sequence, 145 residues long: Arginine repressor (145 aa).

This sequence belongs to the ArgR family.

It localises to the cytoplasm. The protein operates within amino-acid biosynthesis; L-arginine biosynthesis [regulation]. Regulates arginine biosynthesis genes. This chain is Arginine repressor, found in Streptococcus pyogenes serotype M6 (strain ATCC BAA-946 / MGAS10394).